Consider the following 494-residue polypeptide: Glutamyl-tRNA(Gln) amidotransferase subunit A (494 aa).

Active-site charge relay system residues include lysine 79 and serine 159. Serine 183 functions as the Acyl-ester intermediate in the catalytic mechanism.

It belongs to the amidase family. GatA subfamily. In terms of assembly, heterotrimer of A, B and C subunits.

It carries out the reaction L-glutamyl-tRNA(Gln) + L-glutamine + ATP + H2O = L-glutaminyl-tRNA(Gln) + L-glutamate + ADP + phosphate + H(+). Functionally, allows the formation of correctly charged Gln-tRNA(Gln) through the transamidation of misacylated Glu-tRNA(Gln) in organisms which lack glutaminyl-tRNA synthetase. The reaction takes place in the presence of glutamine and ATP through an activated gamma-phospho-Glu-tRNA(Gln). This chain is Glutamyl-tRNA(Gln) amidotransferase subunit A, found in Bartonella henselae (strain ATCC 49882 / DSM 28221 / CCUG 30454 / Houston 1) (Rochalimaea henselae).